Reading from the N-terminus, the 142-residue chain is Transcriptional regulator MraZ (142 aa).

SpoVT-AbrB domains lie at 5–47 and 76–119; these read EYNH…PLGE and ANEV…SKEK.

This sequence belongs to the MraZ family. As to quaternary structure, forms oligomers.

It localises to the cytoplasm. It is found in the nucleoid. The chain is Transcriptional regulator MraZ from Clostridium acetobutylicum (strain ATCC 824 / DSM 792 / JCM 1419 / IAM 19013 / LMG 5710 / NBRC 13948 / NRRL B-527 / VKM B-1787 / 2291 / W).